The primary structure comprises 423 residues: Protein CLP1 homolog (423 aa).

ATP contacts are provided by residues Glu-19, Lys-60, and 122–127 (DVGKTT).

Belongs to the Clp1 family. Clp1 subfamily.

It localises to the nucleus. Functionally, required for endonucleolytic cleavage during polyadenylation-dependent pre-mRNA 3'-end formation. This chain is Protein CLP1 homolog (cbc), found in Anopheles gambiae (African malaria mosquito).